The chain runs to 735 residues: Tripartite terminase subunit 3 (735 aa).

The Nuclear localization signal signature appears at 183-189 (PKKRAKV). Positions 258 to 265 (VPRRHGKT) match the Walker A motif motif. The Walker B motif signature appears at 352-357 (LLFVDE). E357 (for ATPase activity) is an active-site residue. Catalysis depends on for nuclease activity residues D509, E581, and D707.

It belongs to the herpesviridae TRM3 protein family. Interacts with the terminase subunits TRM1 and TRM2. Interacts with portal protein.

It localises to the host nucleus. Functionally, component of the molecular motor that translocates viral genomic DNA in empty capsid during DNA packaging. Forms a tripartite terminase complex together with TRM1 and TRM2 in the host cytoplasm. Once the complex reaches the host nucleus, it interacts with the capsid portal vertex. This portal forms a ring in which genomic DNA is translocated into the capsid. TRM3 carries an RNase H-like nuclease activity that plays an important role for the cleavage of concatemeric viral DNA into unit length genomes. This Homo sapiens (Human) protein is Tripartite terminase subunit 3.